The chain runs to 345 residues: Anthranilate phosphoribosyltransferase (345 aa).

Residues Gly84, 87 to 88, Thr92, 94 to 97, 112 to 120, and Ser124 each bind 5-phospho-alpha-D-ribose 1-diphosphate; these read GD, NIST, and KHGNRSVSS. Gly84 is a binding site for anthranilate. Residue Ser96 participates in Mg(2+) binding. Anthranilate is bound at residue Asn115. An anthranilate-binding site is contributed by Arg170. Asp229 and Glu230 together coordinate Mg(2+).

This sequence belongs to the anthranilate phosphoribosyltransferase family. Homodimer. The cofactor is Mg(2+).

The catalysed reaction is N-(5-phospho-beta-D-ribosyl)anthranilate + diphosphate = 5-phospho-alpha-D-ribose 1-diphosphate + anthranilate. It functions in the pathway amino-acid biosynthesis; L-tryptophan biosynthesis; L-tryptophan from chorismate: step 2/5. In terms of biological role, catalyzes the transfer of the phosphoribosyl group of 5-phosphorylribose-1-pyrophosphate (PRPP) to anthranilate to yield N-(5'-phosphoribosyl)-anthranilate (PRA). In Xanthomonas oryzae pv. oryzae (strain MAFF 311018), this protein is Anthranilate phosphoribosyltransferase.